The sequence spans 661 residues: 7-beta-hydroxy-3-oxochol-24-oyl-CoA 4-desaturase (661 aa).

An FMN-binding site is contributed by Q104. Residue 168–171 participates in substrate binding; the sequence is HCAH. Catalysis depends on Y173, which acts as the Proton donor. FMN is bound by residues R222, K298, and 320-321; that span reads GR. The [4Fe-4S] cluster site is built by C344, C347, C351, and C363. The FAD site is built by G394, E413, Q421, K431, and A458.

It in the N-terminal section; belongs to the NADH:flavin oxidoreductase/NADH oxidase family. In terms of assembly, homotrimer. FMN is required as a cofactor. Requires FAD as cofactor. It depends on [4Fe-4S] cluster as a cofactor.

It carries out the reaction 7beta-hydroxy-3-oxochol-24-oyl-CoA + NAD(+) = 7beta-hydroxy-3-oxochol-4-en-24-oyl-CoA + NADH + H(+). The protein operates within lipid metabolism; bile acid degradation. With respect to regulation, activity is inhibited by sulfhydryl-reactive compounds, acriflavine, o-phenanthroline and EDTA. NADH-dependent flavin oxidoreductase. Stereo-specific NAD(H)-dependent 3-oxo-delta4-cholenoic acid oxidoreductase involved in bile acid 7beta-dehydroxylation. In Clostridium scindens (strain JCM 10418 / VPI 12708), this protein is 7-beta-hydroxy-3-oxochol-24-oyl-CoA 4-desaturase.